Reading from the N-terminus, the 749-residue chain is EF-hand domain-containing family member C2 (749 aa).

DM10 domains are found at residues 75–182, 226–368, and 431–538; these read DKQV…RKIG, HGKI…KSKY, and KSNI…EQNT. The 36-residue stretch at 558–593 folds into the EF-hand domain; sequence GKSRELKQVFKAADSKHTNMVDYNTFRDILMSLTVG.

In terms of assembly, microtubule inner protein component of sperm flagellar doublet microtubules. Expressed in airway epithelial cells.

The protein resides in the cytoplasm. The protein localises to the cytoskeleton. It is found in the cilium axoneme. It localises to the flagellum axoneme. Its function is as follows. Microtubule inner protein (MIP) part of the dynein-decorated doublet microtubules (DMTs) in cilia axoneme, which is required for motile cilia beating. This Homo sapiens (Human) protein is EF-hand domain-containing family member C2.